A 595-amino-acid chain; its full sequence is Estrogen receptor (595 aa).

The segment at 1–184 (MTMTLHTKAS…AMESVKETRY (184 aa)) is modulating(transactivation AF-1); mediates interaction with MACROD1. Serine 10 is a glycosylation site (O-linked (GlcNAc) serine). The segment at 35-47 (LERALSEVYVDSS) is required for interaction with NCOA1. The tract at residues 35-174 (LERALSEVYV…LSSSSEKGSM (140 aa)) is interaction with DDX5; self-association. Phosphoserine; by CDK2 is present on residues serine 103 and serine 105. Serine 118 is modified (phosphoserine). Residues 143-174 (DSGPPAFYRSNSDNRRQSGRERLSSSSEKGSM) are disordered. Residues 154-165 (SDNRRQSGRERL) are compositionally biased toward basic and acidic residues. Serine 167 is modified (phosphoserine; by CK2). 2 NR C4-type zinc fingers span residues 185 to 205 (CAVCNDYASGYHYGVWSCEGC) and 221 to 245 (CPATNQCTIDKNRRKSCQACRLRKC). A DNA-binding region (nuclear receptor) is located at residues 185–250 (CAVCNDYASG…RLRKCYEVGM (66 aa)). Positions 185–310 (CAVCNDYASG…TKKNSPALSL (126 aa)) are mediates interaction with DNTTIP2. A hinge region spans residues 251-310 (MKGGIRKDRRGGRMLKHKRQRDDLEGRNDMGPSGDMRATNLWPSPLVIKHTKKNSPALSL). Asymmetric dimethylarginine; by PRMT1 is present on arginine 260. Over residues 260-269 (RGGRMLKHKR) the composition is skewed to basic residues. The disordered stretch occupies residues 260–285 (RGGRMLKHKRQRDDLEGRNDMGPSGD). Positions 262–595 (GRMLKHKRQR…SEAESFPNTI (334 aa)) are interaction with AKAP13. The tract at residues 264-595 (MLKHKRQRDD…SEAESFPNTI (332 aa)) is self-association. An NR LBD domain is found at 311-547 (TADQMVSALL…DLLLEMLDAH (237 aa)). Positions 311–595 (TADQMVSALL…SEAESFPNTI (285 aa)) are transactivation AF-2. Residues glutamate 353 and arginine 394 each contribute to the 17beta-estradiol site. Cysteine 447 carries the S-palmitoyl cysteine lipid modification. Histidine 524 is a binding site for 17beta-estradiol. Tyrosine 537 is modified (phosphotyrosine; by Tyr-kinases). A disordered region spans residues 554–578 (SRMGVSPEEPSQSQLTTTNSTSSHS). The span at 564-578 (SQSQLTTTNSTSSHS) shows a compositional bias: low complexity. Residue threonine 571 is glycosylated (O-linked (GlcNAc) threonine).

Belongs to the nuclear hormone receptor family. NR3 subfamily. As to quaternary structure, binds DNA as a homodimer. Can form a heterodimer with ESR2. Interacts with coactivator NCOA5. Interacts with PELP1, the interaction is enhanced by 17-beta-estradiol; the interaction increases ESR1 transcriptional activity. Interacts with NCOA7; the interaction is ligand-inducible. Interacts with AKAP13, CUEDC2, HEXIM1, KDM5A, MAP1S, SMARD1, and UBE1C. Interacts with MUC1; the interaction is stimulated by 7 beta-estradiol (E2) and enhances ESR1-mediated transcription. Interacts with DNTTIP2, and UIMC1. Interacts with KMT2D/MLL2. Interacts with ATAD2; the interaction is enhanced by estradiol. Interacts with KIF18A and LDB1. Interacts with RLIM (via its C-terminus). Interacts with MACROD1. Interacts with SH2D4A and PLCG. Interacts with SH2D4A; the interaction blocks binding to PLCG and inhibits estrogen-induced cell proliferation. Interacts with DYNLL1. Interacts with CCDC62; the interaction requires estradiol and appears to enhance the transcription of target genes. Interacts with NR2C1; the interaction prevents homodimerization of ESR1 and suppresses its transcriptional activity and cell growth. Interacts with DNAAF4. Interacts with PRMT2. Interacts with RBFOX2. Interacts with EP300; the interaction is estrogen-dependent and enhanced by CITED1. Interacts with CITED1; the interaction is estrogen-dependent. Interacts with FAM120B, FOXL2, PHB2 and SLC30A9. Interacts with coactivators NCOA3 and NCOA6. Interacts with STK3/MST2 only in the presence of SAV1 and vice-versa. Binds to CSNK1D. Interacts with NCOA2; NCOA2 can interact with ESR1 AF-1 and AF-2 domains simultaneously and mediate their transcriptional synergy. Interacts with DDX5. Interacts with NCOA1; the interaction seems to require a self-association of N-terminal and C-terminal regions. Interacts with ZNF366, DDX17, NFKB1, RELA, SP1 and SP3. Interacts with NRIP1. Interacts with GPER1; the interaction occurs in an estrogen-dependent manner. Interacts with CLOCK and the interaction is stimulated by estrogen. Interacts with TRIP4 (ufmylated); estrogen dependent. Interacts with LMTK3; the interaction phosphorylates ESR1 (in vitro) and protects it against proteasomal degradation. Interacts with CCAR2 (via N-terminus) in a ligand-independent manner. Interacts with ZFHX3. Interacts with SFR1 in a ligand-dependent and -independent manner. Interacts with DCAF13, LATS1 and DCAF1; regulates ESR1 ubiquitination and ubiquitin-mediated proteasomal degradation. Interacts (via DNA-binding domain) with POU4F2 (C-terminus); this interaction increases the estrogen receptor ESR1 transcriptional activity in a DNA- and ligand 17-beta-estradiol-independent manner. Interacts with ESRRB isoform 1. Interacts with UBE3A and WBP2. Interacts with GTF2B. Interacts with RBM39. In the absence of hormonal ligand, interacts with TACC1. Interacts with PI3KR1 or PI3KR2 and PTK2/FAK1. Interacts with SRC. Interacts with BAG1; the interaction is promoted in the absence of estradiol (17-beta-estradiol/E2). Interacts with and ubiquitinated by STUB1; the interaction is promoted in the absence of estradiol (17-beta-estradiol/E2). Interacts with NEDD8. In terms of processing, ubiquitinated; regulated by LATS1 via DCAF1 it leads to ESR1 proteasomal degradation. Deubiquitinated by OTUB1. Ubiquitinated by STUB1/CHIP; in the CA1 hippocampal region following loss of endogenous circulating estradiol (17-beta-estradiol/E2). Ubiquitinated by UBR5, leading to its degradation: UBR5 specifically recognizes and binds ligand-bound ESR1 when it is not associated with coactivators (NCOAs). In presence of NCOAs, the UBR5-degron is not accessible, preventing its ubiquitination and degradation. Phosphorylated by cyclin A/CDK2 and CK1. Phosphorylation probably enhances transcriptional activity. Dephosphorylation at Ser-118 by PPP5C inhibits its transactivation activity. Phosphorylated by LMTK3 (in vitro). Post-translationally, palmitoylated at Cys-447 by ZDHHC7 and ZDHHC21. Palmitoylation is required for plasma membrane targeting and for rapid intracellular signaling via ERK and AKT kinases and cAMP generation, but not for signaling mediated by the nuclear hormone receptor. In terms of processing, dimethylated by PRMT1 at Arg-260. The methylation may favor cytoplasmic localization. Demethylated by JMJD6 at Arg-260.

Its subcellular location is the nucleus. It localises to the cytoplasm. The protein resides in the golgi apparatus. It is found in the cell membrane. Its function is as follows. Nuclear hormone receptor. The steroid hormones and their receptors are involved in the regulation of eukaryotic gene expression and affect cellular proliferation and differentiation in target tissues. Ligand-dependent nuclear transactivation involves either direct homodimer binding to a palindromic estrogen response element (ERE) sequence or association with other DNA-binding transcription factors, such as AP-1/c-Jun, c-Fos, ATF-2, Sp1 and Sp3, to mediate ERE-independent signaling. Ligand binding induces a conformational change allowing subsequent or combinatorial association with multiprotein coactivator complexes through LXXLL motifs of their respective components. Mutual transrepression occurs between the estrogen receptor (ER) and NF-kappa-B in a cell-type specific manner. Decreases NF-kappa-B DNA-binding activity and inhibits NF-kappa-B-mediated transcription from the IL6 promoter and displace RELA/p65 and associated coregulators from the promoter. Recruited to the NF-kappa-B response element of the CCL2 and IL8 promoters and can displace CREBBP. Present with NF-kappa-B components RELA/p65 and NFKB1/p50 on ERE sequences. Can also act synergistically with NF-kappa-B to activate transcription involving respective recruitment adjacent response elements; the function involves CREBBP. Can activate the transcriptional activity of TFF1. Also mediates membrane-initiated estrogen signaling involving various kinase cascades. Essential for MTA1-mediated transcriptional regulation of BRCA1 and BCAS3. Maintains neuronal survival in response to ischemic reperfusion injury when in the presence of circulating estradiol (17-beta-estradiol/E2). The sequence is that of Estrogen receptor (ESR1) from Mesocricetus auratus (Golden hamster).